Consider the following 262-residue polypeptide: Putative non-heme bromoperoxidase BpoC (262 aa).

Substrate-binding positions include arginine 21, 87–88 (SM), and arginine 120. The active site involves serine 87. Active-site residues include aspartate 211 and histidine 239. Histidine 239 contacts substrate.

The protein belongs to the AB hydrolase superfamily. Homodimer.

The sequence is that of Putative non-heme bromoperoxidase BpoC (bpoC) from Mycobacterium tuberculosis (strain CDC 1551 / Oshkosh).